A 540-amino-acid polypeptide reads, in one-letter code: Berberine bridge enzyme-like 16 (540 aa).

The N-terminal stretch at 1–24 is a signal peptide; it reads MKFWSRPLTFLIIIIYLIIQQVNS. A disulfide bridge connects residues Cys-38 and Cys-101. The N-linked (GlcNAc...) asparagine glycan is linked to Asn-59. In terms of domain architecture, FAD-binding PCMH-type spans 79–254; the sequence is STRKPEVIVA…LAWKIKLVRV (176 aa). The 6-(S-cysteinyl)-8alpha-(pros-histidyl)-FAD (His-Cys) cross-link spans 116–178; sequence HDYEGFSYTS…KVHAFPAGVC (63 aa). N-linked (GlcNAc...) asparagine glycosylation is found at Asn-325 and Asn-496.

Belongs to the oxygen-dependent FAD-linked oxidoreductase family. It depends on FAD as a cofactor. The FAD cofactor is bound via a bicovalent 6-S-cysteinyl, 8alpha-N1-histidyl FAD linkage.

The protein resides in the secreted. It localises to the cell wall. In Arabidopsis thaliana (Mouse-ear cress), this protein is Berberine bridge enzyme-like 16.